The primary structure comprises 574 residues: Interactor of HORMAD1 protein 1 (574 aa).

The segment at 113-133 (GLSKQFEEKKRRATDQSDSET) is disordered. Residues 117-127 (QFEEKKRRATD) are compositionally biased toward basic and acidic residues. The stretch at 217-240 (MEMKSTLKNLEVLVVEQTKNLQQF) forms a coiled coil. Disordered stretches follow at residues 267-324 (GHLK…GVWD), 372-393 (FSNL…GASQ), and 426-457 (TEQK…DRKQ). A compositionally biased stretch (low complexity) spans 272-284 (STSQTSPSLTQSL). Over residues 372–381 (FSNLPSQRAG) the composition is skewed to polar residues. Over residues 431 to 449 (RPCRKRRRGKKQQPQRSKR) the composition is skewed to basic residues. Phosphoserine occurs at positions 476, 569, and 570.

In terms of assembly, part of the MCD recombinosome complex, at least composed of IHO1, REC114 and MEI4. Interacts with REC114. Interacts with MEI4. Interacts with HORMAD1. Interacts with ANKRD31. In terms of tissue distribution, detected in spermatocytes and testis (at protein level).

Its subcellular location is the chromosome. In terms of biological role, required for DNA double-strand breaks (DSBs) formation in unsynapsed regions during meiotic recombination. Probably acts by forming a complex with MEI4 and REC114, which activates DSBs formation in unsynapsed regions, an essential step to ensure completion of synapsis. Not required for HORMAD1 functions in pairing-independent synaptonemal complex formation, ATR recruitment to unsynapsed axes, meiotic silencing of unsynapsed chromatin (MSUC) or meiotic surveillance. This is Interactor of HORMAD1 protein 1 from Mus musculus (Mouse).